A 412-amino-acid chain; its full sequence is Serine hydroxymethyltransferase (412 aa).

Residues Leu125 and 129-131 (GHL) contribute to the (6S)-5,6,7,8-tetrahydrofolate site. Lys234 carries the N6-(pyridoxal phosphate)lysine modification. Glu250 contributes to the (6S)-5,6,7,8-tetrahydrofolate binding site.

Belongs to the SHMT family. In terms of assembly, homodimer. The cofactor is pyridoxal 5'-phosphate.

The protein resides in the cytoplasm. It carries out the reaction (6R)-5,10-methylene-5,6,7,8-tetrahydrofolate + glycine + H2O = (6S)-5,6,7,8-tetrahydrofolate + L-serine. The protein operates within one-carbon metabolism; tetrahydrofolate interconversion. Its pathway is amino-acid biosynthesis; glycine biosynthesis; glycine from L-serine: step 1/1. Functionally, catalyzes the reversible interconversion of serine and glycine with tetrahydrofolate (THF) serving as the one-carbon carrier. This reaction serves as the major source of one-carbon groups required for the biosynthesis of purines, thymidylate, methionine, and other important biomolecules. Also exhibits THF-independent aldolase activity toward beta-hydroxyamino acids, producing glycine and aldehydes, via a retro-aldol mechanism. In Deinococcus geothermalis (strain DSM 11300 / CIP 105573 / AG-3a), this protein is Serine hydroxymethyltransferase.